A 503-amino-acid chain; its full sequence is Protein-cysteine N-palmitoyltransferase HHAT-like protein (503 aa).

8 consecutive transmembrane segments (helical) span residues 12-31 (LGLY…RGLL), 65-87 (WVMW…VLFA), 100-122 (WMYA…LLLL), 127-149 (MVLY…LASL), 250-272 (AGLS…ILTI), 287-309 (LAGL…FGVV), 426-445 (VRAL…NLVS), and 460-482 (ILTG…VQLV).

Belongs to the membrane-bound acyltransferase family. HHAT subfamily. Interacts with SHH.

The protein resides in the endoplasmic reticulum membrane. Its function is as follows. Negatively regulates N-terminal palmitoylation of SHH by HHAT/SKN. This chain is Protein-cysteine N-palmitoyltransferase HHAT-like protein (Hhatl), found in Mus musculus (Mouse).